A 360-amino-acid polypeptide reads, in one-letter code: 1-aminocyclopropane-1-carboxylate oxidase homolog 6 (360 aa).

In terms of domain architecture, Fe2OG dioxygenase spans 208 to 309 (KGLLLLCHYY…ISVASFFSTS (102 aa)). The Fe cation site is built by histidine 232, aspartate 234, and histidine 288. Arginine 299 lines the 2-oxoglutarate pocket.

Belongs to the iron/ascorbate-dependent oxidoreductase family. Requires Fe(2+) as cofactor. As to expression, constitutively expressed in leaves and blades.

The sequence is that of 1-aminocyclopropane-1-carboxylate oxidase homolog 6 from Arabidopsis thaliana (Mouse-ear cress).